The primary structure comprises 221 residues: Fructokinase (221 aa).

Belongs to the carbohydrate kinase PfkB family.

It carries out the reaction D-fructose + ATP = D-fructose 6-phosphate + ADP + H(+). This chain is Fructokinase (scrK), found in Salmonella thompson.